The chain runs to 281 residues: Protein EMBRYO DEFECTIVE 1674 (281 aa).

Composition is skewed to polar residues over residues 1–14 (MTTTRAKSKFQSLS) and 24–41 (PNTSPSTYSKTLPKPNSS). A disordered region spans residues 1–47 (MTTTRAKSKFQSLSACRFTPLPEPNTSPSTYSKTLPKPNSSPGTDGT). One can recognise an SANTA domain in the interval 66-153 (VTLSDWWLTK…LGFPYDWEDY (88 aa)).

Its function is as follows. Required for normal embryo development. The sequence is that of Protein EMBRYO DEFECTIVE 1674 from Arabidopsis thaliana (Mouse-ear cress).